Consider the following 1017-residue polypeptide: Peroxisomal ATPase PEX6 (1017 aa).

758–765 (GPPGTGKT) is an ATP binding site.

Belongs to the AAA ATPase family. In terms of assembly, interacts with PEX1; forming the PEX1-PEX6 AAA ATPase complex, which is composed of a heterohexamer formed by a trimer of PEX1-PEX6 dimers.

The protein resides in the cytoplasm. The protein localises to the cytosol. Its subcellular location is the peroxisome membrane. It catalyses the reaction ATP + H2O = ADP + phosphate + H(+). Functionally, component of the PEX1-PEX6 AAA ATPase complex, a protein dislocase complex that mediates the ATP-dependent extraction of the PEX5 receptor from peroxisomal membranes, an essential step for PEX5 recycling. Specifically recognizes PEX5 monoubiquitinated at 'Cys-6', and pulls it out of the peroxisome lumen through the PEX2-PEX10-PEX12 retrotranslocation channel. Extraction by the PEX1-PEX6 AAA ATPase complex is accompanied by unfolding of the TPR repeats and release of bound cargo from PEX5. The sequence is that of Peroxisomal ATPase PEX6 (PEX6) from Candida glabrata (strain ATCC 2001 / BCRC 20586 / JCM 3761 / NBRC 0622 / NRRL Y-65 / CBS 138) (Yeast).